The chain runs to 121 residues: Aspartate 1-decarboxylase (121 aa).

The active-site Schiff-base intermediate with substrate; via pyruvic acid is the serine 25. Serine 25 bears the Pyruvic acid (Ser) mark. Threonine 57 provides a ligand contact to substrate. Tyrosine 58 functions as the Proton donor in the catalytic mechanism. 73–75 (GAA) provides a ligand contact to substrate.

The protein belongs to the PanD family. In terms of assembly, heterooctamer of four alpha and four beta subunits. It depends on pyruvate as a cofactor. Is synthesized initially as an inactive proenzyme, which is activated by self-cleavage at a specific serine bond to produce a beta-subunit with a hydroxyl group at its C-terminus and an alpha-subunit with a pyruvoyl group at its N-terminus.

The protein resides in the cytoplasm. The enzyme catalyses L-aspartate + H(+) = beta-alanine + CO2. It functions in the pathway cofactor biosynthesis; (R)-pantothenate biosynthesis; beta-alanine from L-aspartate: step 1/1. In terms of biological role, catalyzes the pyruvoyl-dependent decarboxylation of aspartate to produce beta-alanine. This Sulfurimonas denitrificans (strain ATCC 33889 / DSM 1251) (Thiomicrospira denitrificans (strain ATCC 33889 / DSM 1251)) protein is Aspartate 1-decarboxylase.